Consider the following 416-residue polypeptide: Tyrosine permease (416 aa).

Helical transmembrane passes span 13 to 33, 34 to 54, 86 to 106, 127 to 147, 153 to 173, 192 to 212, 231 to 251, 260 to 280, 286 to 306, 337 to 357, and 389 to 409; these read GTML…PIAM, AGIW…MMLL, VVVG…YISG, LSVI…SLLV, VLII…IWHV, LPYI…HGNV, IFIG…VTMG, PIIA…GLFT, LILT…ATLG, VVCF…GLAF, and ILNL…LDVF.

It belongs to the amino acid/polyamine transporter 2 family. Mtr/TnaB/TyrP permease subfamily.

The protein resides in the cell inner membrane. The polypeptide is Tyrosine permease (tutB) (Enterobacter agglomerans (Erwinia herbicola)).